The following is a 212-amino-acid chain: Phosphatidylserine decarboxylase proenzyme (212 aa).

Serine 182 (schiff-base intermediate with substrate; via pyruvic acid) is an active-site residue. A Pyruvic acid (Ser); by autocatalysis modification is found at serine 182.

This sequence belongs to the phosphatidylserine decarboxylase family. PSD-A subfamily. In terms of assembly, heterodimer of a large membrane-associated beta subunit and a small pyruvoyl-containing alpha subunit. It depends on pyruvate as a cofactor. In terms of processing, is synthesized initially as an inactive proenzyme. Formation of the active enzyme involves a self-maturation process in which the active site pyruvoyl group is generated from an internal serine residue via an autocatalytic post-translational modification. Two non-identical subunits are generated from the proenzyme in this reaction, and the pyruvate is formed at the N-terminus of the alpha chain, which is derived from the carboxyl end of the proenzyme. The post-translation cleavage follows an unusual pathway, termed non-hydrolytic serinolysis, in which the side chain hydroxyl group of the serine supplies its oxygen atom to form the C-terminus of the beta chain, while the remainder of the serine residue undergoes an oxidative deamination to produce ammonia and the pyruvoyl prosthetic group on the alpha chain.

The protein resides in the cell membrane. The catalysed reaction is a 1,2-diacyl-sn-glycero-3-phospho-L-serine + H(+) = a 1,2-diacyl-sn-glycero-3-phosphoethanolamine + CO2. Its pathway is phospholipid metabolism; phosphatidylethanolamine biosynthesis; phosphatidylethanolamine from CDP-diacylglycerol: step 2/2. Catalyzes the formation of phosphatidylethanolamine (PtdEtn) from phosphatidylserine (PtdSer). The polypeptide is Phosphatidylserine decarboxylase proenzyme (Pelodictyon phaeoclathratiforme (strain DSM 5477 / BU-1)).